Consider the following 63-residue polypeptide: Juvenile hormone esterase, isoform B (63 aa).

Asn-20 carries an N-linked (GlcNAc...) asparagine glycan.

This sequence belongs to the type-B carboxylesterase/lipase family. As to expression, fat body, the site of their biosynthesis, and the hemolymph where it is secreted.

It carries out the reaction juvenile hormone I + H2O = juvenile hormone I carboxylate + methanol + H(+). It catalyses the reaction juvenile hormone III + H2O = juvenile hormone III carboxylate + methanol + H(+). Its function is as follows. JH esterase plays a crucial role in the decrease of JH activity in lepidopteran insects, by hydrolyzing the methyl ester of JH. It is also involved in the transport of JH. This chain is Juvenile hormone esterase, isoform B, found in Trichoplusia ni (Cabbage looper).